The sequence spans 429 residues: Alpha-L-rhamnosidase rgxB (429 aa).

An N-terminal signal peptide occupies residues 1 to 20 (MAPIALKILLFTSLIVPSIS). N67, N77, N97, N103, N112, N135, and N219 each carry an N-linked (GlcNAc...) asparagine glycan. The stretch at 217-238 (SKNITLTNWEVVNGDDSISTKA) is one PbH1 1 repeat. Catalysis depends on D231, which acts as the Proton donor. N-linked (GlcNAc...) asparagine glycosylation is found at N239, N247, N278, and N344. PbH1 repeat units follow at residues 240 to 260 (STDI…AIGS) and 271 to 292 (VERL…YFKT). C374 and C380 are disulfide-bonded. N-linked (GlcNAc...) asparagine glycans are attached at residues N387, N395, and N414.

This sequence belongs to the glycosyl hydrolase 28 family.

It is found in the secreted. It catalyses the reaction Hydrolysis of terminal non-reducing alpha-L-rhamnose residues in alpha-L-rhamnosides.. Its function is as follows. Alpha-L-rhamnosidase which is able to degrade p-nitrophenyl-alpha-L-rhamnopyranoside (pnp_Rha). The natural substrate of this enzyme has not been identified yet. This chain is Alpha-L-rhamnosidase rgxB (rgxB), found in Aspergillus niger (strain ATCC MYA-4892 / CBS 513.88 / FGSC A1513).